The primary structure comprises 579 residues: Eukaryotic translation initiation factor 3 subunit D (579 aa).

3 disordered regions span residues 1–20, 51–72, and 109–170; these read MASFKLPELQPDNDLWGPAS, NASGASNDAANARGGRQGRARD, and RRGG…FGWK. Low complexity predominate over residues 51 to 64; it reads NASGASNDAANARG. A compositionally biased stretch (gly residues) spans 120-167; that stretch reads GGRGGRGGAGGAGAAGGRGASKFGAGAGRGARGGRGGAAGARRGGGRF. An RNA gate region spans residues 307-321; the sequence is AFDYLTVNENAADPP.

This sequence belongs to the eIF-3 subunit D family. Component of the eukaryotic translation initiation factor 3 (eIF-3) complex.

Its subcellular location is the cytoplasm. Functionally, mRNA cap-binding component of the eukaryotic translation initiation factor 3 (eIF-3) complex, which is involved in protein synthesis of a specialized repertoire of mRNAs and, together with other initiation factors, stimulates binding of mRNA and methionyl-tRNAi to the 40S ribosome. The eIF-3 complex specifically targets and initiates translation of a subset of mRNAs involved in cell proliferation. In the eIF-3 complex, eif3d specifically recognizes and binds the 7-methylguanosine cap of a subset of mRNAs. This Mycosarcoma maydis (Corn smut fungus) protein is Eukaryotic translation initiation factor 3 subunit D.